Here is a 587-residue protein sequence, read N- to C-terminus: L-ascorbate oxidase (587 aa).

An N-terminal signal peptide occupies residues 1–33; the sequence is MAKVADKPFFPKPFLSFLVLSIIFGFGITLSEA. Plastocyanin-like domains lie at 38–157 and 169–335; these read IKHY…LIVD and DEEI…NYLP. 3 cysteine pairs are disulfide-bonded: Cys54-Cys236, Cys116-Cys574, and Cys215-Cys228. Positions 95, 97, 139, and 141 each coordinate Cu cation. Asn360, Asn401, and Asn475 each carry an N-linked (GlcNAc...) asparagine glycan. The Plastocyanin-like 3 domain occupies 379 to 559; sequence NRRLFLLNTQ…HMGMGVVFAE (181 aa). Residues His480, His483, His485, His542, Cys543, His544, His548, and Met553 each contribute to the Cu cation site.

It belongs to the multicopper oxidase family. As to quaternary structure, dimer. It depends on Cu cation as a cofactor.

Its subcellular location is the secreted. The enzyme catalyses 4 L-ascorbate + O2 = 4 monodehydro-L-ascorbate radical + 2 H2O. Functionally, may be involved in a redox system involving ascorbic acid. In Cucumis sativus (Cucumber), this protein is L-ascorbate oxidase.